A 373-amino-acid chain; its full sequence is 3',5'-bisphosphate nucleotidase AHL (373 aa).

The Proton acceptor role is filled by aspartate 52. Residues glutamate 77, aspartate 144, valine 146, and aspartate 147 each contribute to the Mg(2+) site. Catalysis depends on threonine 149, which acts as the Proton acceptor. Positions 149, 281, 284, 298, and 310 each coordinate adenosine 3',5'-bisphosphate. Residues serine 281, lysine 284, lysine 298, and aspartate 310 each coordinate AMP. Aspartate 310 provides a ligand contact to Mg(2+).

Belongs to the inositol monophosphatase superfamily. Requires Mg(2+) as cofactor. In terms of tissue distribution, expressed in roots, leaves, stems, flowers and siliques.

The enzyme catalyses adenosine 3',5'-bisphosphate + H2O = AMP + phosphate. It catalyses the reaction 3'-phosphoadenylyl sulfate + H2O = adenosine 5'-phosphosulfate + phosphate. Its activity is regulated as follows. Inhibited by Li(+) (IC(50)=10 mM), Na(+) (IC(50)=50 mM) and Ca(2+) (IC(50)=0.06 mM). Functionally, phosphatase that converts adenosine 3'-phosphate 5'-phosphosulfate (PAPS) to adenosine 5'-phosphosulfate (APS) and 3'-phosphoadenosine 5'-phosphate (3'-PAP) to AMP. May regulate the flux of sulfur in the sulfur-activation pathway by converting PAPS to APS. Prevents both the toxicity of PAP on RNA processing enzymes as well as the product inhibition by PAP of sulfate conjugation. The chain is 3',5'-bisphosphate nucleotidase AHL from Arabidopsis thaliana (Mouse-ear cress).